A 731-amino-acid chain; its full sequence is Autophagy-related protein 20 (731 aa).

Over residues 1-22 (MSSVLRNQDNPPTISEVSSTTK) the composition is skewed to polar residues. The disordered stretch occupies residues 1-130 (MSSVLRNQDN…NNKSNNVSRV (130 aa)). Residues 31 to 41 (KQEEKEKEKEI) are compositionally biased toward basic and acidic residues. Positions 69 to 82 (SFMTANSFNEGPNT) are enriched in polar residues. 2 stretches are compositionally biased toward low complexity: residues 92 to 102 (NNNSSSNNNRG) and 113 to 128 (LLLY…NNVS). The PX domain occupies 164–340 (IQITEAGNSN…KFLDPNANWG (177 aa)). A 1,2-diacyl-sn-glycero-3-phospho-(1D-myo-inositol-3-phosphate) contacts are provided by Arg205, Ser207, and Lys231. Positions 253–277 (SVAGSNGNSGGSGGGGASGGAGSGS) are disordered. Residues 259–277 (GNSGGSGGGGASGGAGSGS) show a composition bias toward gly residues. Arg306 is an a 1,2-diacyl-sn-glycero-3-phospho-(1D-myo-inositol-3-phosphate) binding site. The disordered stretch occupies residues 586 to 626 (NSQVKPKNGKYNLEQQQSSTVSPAPPPGPPPSSSSSSSSSS). The span at 608–617 (PAPPPGPPPS) shows a compositional bias: pro residues.

It belongs to the sorting nexin family.

Its subcellular location is the endosome membrane. It is found in the preautophagosomal structure membrane. Required for cytoplasm to vacuole transport (Cvt), pexophagy and mitophagy. Also involved in endoplasmic reticulum-specific autophagic process and is essential for the survival of cells subjected to severe ER stress. Functions in protein retrieval from the endocytic pathway. This chain is Autophagy-related protein 20 (ATG20), found in Candida albicans (strain SC5314 / ATCC MYA-2876) (Yeast).